Here is an 83-residue protein sequence, read N- to C-terminus: UPF0729 protein CBG02799 (83 aa).

The disordered stretch occupies residues 51-83 (QEKKEEEEEKEKSCCSTEAENTTEVTTETKKDQ). Low complexity predominate over residues 67 to 76 (TEAENTTEVT).

Belongs to the UPF0729 family.

This Caenorhabditis briggsae protein is UPF0729 protein CBG02799.